The chain runs to 482 residues: ATP synthase subunit beta (482 aa).

Position 161 to 168 (161 to 168) interacts with ATP; the sequence is GGAGVGKT.

Belongs to the ATPase alpha/beta chains family. In terms of assembly, F-type ATPases have 2 components, CF(1) - the catalytic core - and CF(0) - the membrane proton channel. CF(1) has five subunits: alpha(3), beta(3), gamma(1), delta(1), epsilon(1). CF(0) has three main subunits: a(1), b(2) and c(9-12). The alpha and beta chains form an alternating ring which encloses part of the gamma chain. CF(1) is attached to CF(0) by a central stalk formed by the gamma and epsilon chains, while a peripheral stalk is formed by the delta and b chains.

The protein localises to the cell inner membrane. It carries out the reaction ATP + H2O + 4 H(+)(in) = ADP + phosphate + 5 H(+)(out). Produces ATP from ADP in the presence of a proton gradient across the membrane. The catalytic sites are hosted primarily by the beta subunits. The protein is ATP synthase subunit beta of Anaeromyxobacter dehalogenans (strain 2CP-C).